The chain runs to 273 residues: Large ribosomal subunit protein uL2 (273 aa).

The segment at 222–273 is disordered; sequence GVAMNPVDHPMGGGEGRSSGGRHPCTPWGVPTKGYRTRKSKRSDKLIVHRRK. A compositionally biased stretch (basic and acidic residues) spans 264-273; sequence SDKLIVHRRK.

Belongs to the universal ribosomal protein uL2 family. Part of the 50S ribosomal subunit. Forms a bridge to the 30S subunit in the 70S ribosome.

In terms of biological role, one of the primary rRNA binding proteins. Required for association of the 30S and 50S subunits to form the 70S ribosome, for tRNA binding and peptide bond formation. It has been suggested to have peptidyltransferase activity; this is somewhat controversial. Makes several contacts with the 16S rRNA in the 70S ribosome. The sequence is that of Large ribosomal subunit protein uL2 from Syntrophobacter fumaroxidans (strain DSM 10017 / MPOB).